The sequence spans 321 residues: Porphobilinogen deaminase (321 aa).

An S-(dipyrrolylmethanemethyl)cysteine modification is found at Cys243.

This sequence belongs to the HMBS family. As to quaternary structure, monomer. Dipyrromethane is required as a cofactor.

The catalysed reaction is 4 porphobilinogen + H2O = hydroxymethylbilane + 4 NH4(+). It participates in porphyrin-containing compound metabolism; protoporphyrin-IX biosynthesis; coproporphyrinogen-III from 5-aminolevulinate: step 2/4. Its function is as follows. Tetrapolymerization of the monopyrrole PBG into the hydroxymethylbilane pre-uroporphyrinogen in several discrete steps. The protein is Porphobilinogen deaminase of Histophilus somni (strain 129Pt) (Haemophilus somnus).